The primary structure comprises 255 residues: Eukaryotic translation initiation factor 3 subunit J (255 aa).

Acidic residues-rich tracts occupy residues 1–16 (MAENDSWDADDFEAED) and 34–53 (EGEDEEEDVKDNWDDEEEAQ). The tract at residues 1–107 (MAENDSWDAD…SSNLPEITPE (107 aa)) is disordered. Positions 54-95 (DATKQEPQKTELKVPEKKKLQEKIKEKENLQKKRKEELKKQA) are enriched in basic and acidic residues. Positions 69-131 (EKKKLQEKIK…DSDLELAKEA (63 aa)) form a coiled coil.

This sequence belongs to the eIF-3 subunit J family. In terms of assembly, component of the eukaryotic translation initiation factor 3 (eIF-3) complex, which is composed of 13 subunits: eif3a, eif3b, eif3c, eif3d, eif3e, eif3f, eif3g, eif3h, eif3i, eif3j, eif3k, eif3l and eif3m.

Its subcellular location is the cytoplasm. Functionally, component of the eukaryotic translation initiation factor 3 (eIF-3) complex, which is involved in protein synthesis of a specialized repertoire of mRNAs and, together with other initiation factors, stimulates binding of mRNA and methionyl-tRNAi to the 40S ribosome. The eIF-3 complex specifically targets and initiates translation of a subset of mRNAs involved in cell proliferation. The chain is Eukaryotic translation initiation factor 3 subunit J (eif3j) from Xenopus laevis (African clawed frog).